Consider the following 417-residue polypeptide: Gamma-glutamyl phosphate reductase (417 aa).

Belongs to the gamma-glutamyl phosphate reductase family.

It is found in the cytoplasm. It catalyses the reaction L-glutamate 5-semialdehyde + phosphate + NADP(+) = L-glutamyl 5-phosphate + NADPH + H(+). It participates in amino-acid biosynthesis; L-proline biosynthesis; L-glutamate 5-semialdehyde from L-glutamate: step 2/2. Functionally, catalyzes the NADPH-dependent reduction of L-glutamate 5-phosphate into L-glutamate 5-semialdehyde and phosphate. The product spontaneously undergoes cyclization to form 1-pyrroline-5-carboxylate. The polypeptide is Gamma-glutamyl phosphate reductase (Escherichia coli O45:K1 (strain S88 / ExPEC)).